Reading from the N-terminus, the 414-residue chain is uncharacterized protein (414 aa).

Positions 1 to 16 (MRVILLLAFLISLTEC) are cleaved as a signal peptide. The 40-residue stretch at 20–59 (SEDLALYDLVEEVGVNFYEWFDIPRDASSNQVKKAYRKLT) folds into the Myb-like 1 domain. In terms of domain architecture, J spans 35–99 (NFYEWFDIPR…ELREKYDNVL (65 aa)). A helical transmembrane segment spans residues 125-145 (ILVLLFIGTIAHYLMMWAAYF). The disordered stretch occupies residues 211-234 (MTPKEVEPEEPTEEELAQQRRQQR). Residues 217-226 (EPEEPTEEEL) show a composition bias toward acidic residues. A Myb-like 2 domain is found at 274-320 (AQKQSGATWTPDELASLVRLSTEKYPAGTPNRWEQMGRVLNRSAEDV). The region spanning 352-407 (KSEDDWSQAEQKAFETALQKYPKGTDERWERISEEIGSKTKKQVMVRFKQLAEMIR) is the SANT domain.

Its subcellular location is the nucleus membrane. This is an uncharacterized protein from Caenorhabditis elegans.